The chain runs to 500 residues: Probable cytosol aminopeptidase (500 aa).

Mn(2+) contacts are provided by K264 and D269. The active site involves K276. Mn(2+) is bound by residues D287, D346, and E348. Residue R350 is part of the active site.

Belongs to the peptidase M17 family. Mn(2+) serves as cofactor.

The protein resides in the cytoplasm. The catalysed reaction is Release of an N-terminal amino acid, Xaa-|-Yaa-, in which Xaa is preferably Leu, but may be other amino acids including Pro although not Arg or Lys, and Yaa may be Pro. Amino acid amides and methyl esters are also readily hydrolyzed, but rates on arylamides are exceedingly low.. It catalyses the reaction Release of an N-terminal amino acid, preferentially leucine, but not glutamic or aspartic acids.. In terms of biological role, presumably involved in the processing and regular turnover of intracellular proteins. Catalyzes the removal of unsubstituted N-terminal amino acids from various peptides. The chain is Probable cytosol aminopeptidase from Rhodopseudomonas palustris (strain ATCC BAA-98 / CGA009).